A 333-amino-acid chain; its full sequence is Taste receptor type 2 member 38 (333 aa).

Residues Met-1 to Thr-17 are Extracellular-facing. A helical membrane pass occupies residues Phe-18–Leu-38. Topologically, residues Val-39–Cys-55 are cytoplasmic. Residues Val-56–Ile-76 form a helical membrane-spanning segment. At Gln-77–Ala-94 the chain is on the extracellular side. The chain crosses the membrane as a helical span at residues Ile-95–Leu-115. Over Leu-116–Gln-142 the chain is Cytoplasmic. The chain crosses the membrane as a helical span at residues Met-143–Phe-163. Topologically, residues Ser-164–Asn-190 are extracellular. Asn-178 carries N-linked (GlcNAc...) asparagine glycosylation. Residues Leu-191–Val-211 traverse the membrane as a helical segment. The Cytoplasmic portion of the chain corresponds to Ser-212 to Ser-251. The helical transmembrane segment at Phe-252–Leu-272 threads the bilayer. Residues Trp-273–Lys-276 lie on the Extracellular side of the membrane. Residues Ile-277–Leu-297 traverse the membrane as a helical segment. Topologically, residues Ile-298–Cys-333 are cytoplasmic.

The protein belongs to the G-protein coupled receptor T2R family.

The protein resides in the membrane. Receptor that may play a role in the perception of bitterness and is gustducin-linked. May play a role in sensing the chemical composition of the gastrointestinal content. The activity of this receptor may stimulate alpha gustducin, mediate PLC-beta-2 activation and lead to the gating of TRPM5. This chain is Taste receptor type 2 member 38 (TAS2R38), found in Gorilla gorilla gorilla (Western lowland gorilla).